The primary structure comprises 354 residues: MADEFGDGDTVELPVGKEAVDALIRENSHIFSDTQCKVCSAVLISESQKLAHYQSRKHANKVRRYMSIHQGEEFVSAKKFKAAPAESSDGDDRSKCCPICNMTFSSPVVAESHYSGKTHIKNLRLREQGGVTEGMLHQAKKLVVTRTPTIATKIDNRMDQSDPTKFCKLCHATFNNPLMAEQHYAGKKHKKQETKTQLMTIYTSSGHTPAQAPIAINVNSPLPGSGSAGKGFSCDTCNIVLNSIEQYQAHVSGAKHKNQLMSMTPLSKEGPPAAGGPSALAGPPSTGGALSSGGPSARGFSASGGPTPKGPSSFGGLPPMGGLMPPPYPPPHSQPYVREDMMGPDGYTYFNKDF.

Matrin-type zinc fingers lie at residues 34–64, 95–125, 165–195, and 232–262; these read TQCK…KVRR, KCCP…NLRL, KFCK…QETK, and FSCD…QLMS. Cys36, Cys39, His52, His58, Cys97, Cys100, His113, and His119 together coordinate Zn(2+). Residues 263-343 are disordered; sequence MTPLSKEGPP…QPYVREDMMG (81 aa). 2 stretches are compositionally biased toward low complexity: residues 270–289 and 310–323; these read GPPA…TGGA and GPSS…MGGL. Over residues 324–333 the composition is skewed to pro residues; the sequence is MPPPYPPPHS.

It is found in the nucleus. The protein resides in the cytoplasm. Functionally, binds preferentially to dsRNA, but also to RNA-DNA hybrids. This chain is Zinc finger protein 346, found in Xenopus tropicalis (Western clawed frog).